A 56-amino-acid polypeptide reads, in one-letter code: Large ribosomal subunit protein bL32 (56 aa).

Residues 1-16 (MAVQKSKKSRARRGMR) are compositionally biased toward basic residues. The interval 1 to 56 (MAVQKSKKSRARRGMRRSHDAISGPSLTVDQTSGETHRRHHVTADGYYKGVQVISK) is disordered. The segment covering 25-34 (PSLTVDQTSG) has biased composition (polar residues).

Belongs to the bacterial ribosomal protein bL32 family.

The sequence is that of Large ribosomal subunit protein bL32 from Pseudoalteromonas translucida (strain TAC 125).